An 887-amino-acid polypeptide reads, in one-letter code: Alanine--tRNA ligase (887 aa).

Residues H581, H585, C683, and H687 each coordinate Zn(2+).

It belongs to the class-II aminoacyl-tRNA synthetase family. The cofactor is Zn(2+).

The protein resides in the cytoplasm. It catalyses the reaction tRNA(Ala) + L-alanine + ATP = L-alanyl-tRNA(Ala) + AMP + diphosphate. In terms of biological role, catalyzes the attachment of alanine to tRNA(Ala) in a two-step reaction: alanine is first activated by ATP to form Ala-AMP and then transferred to the acceptor end of tRNA(Ala). Also edits incorrectly charged Ser-tRNA(Ala) and Gly-tRNA(Ala) via its editing domain. The sequence is that of Alanine--tRNA ligase from Ehrlichia chaffeensis (strain ATCC CRL-10679 / Arkansas).